A 252-amino-acid chain; its full sequence is 5-oxoprolinase subunit A 1 (252 aa).

This sequence belongs to the LamB/PxpA family. In terms of assembly, forms a complex composed of PxpA, PxpB and PxpC.

It carries out the reaction 5-oxo-L-proline + ATP + 2 H2O = L-glutamate + ADP + phosphate + H(+). Catalyzes the cleavage of 5-oxoproline to form L-glutamate coupled to the hydrolysis of ATP to ADP and inorganic phosphate. This Bordetella bronchiseptica (strain ATCC BAA-588 / NCTC 13252 / RB50) (Alcaligenes bronchisepticus) protein is 5-oxoprolinase subunit A 1.